A 215-amino-acid polypeptide reads, in one-letter code: Redox-sensing transcriptional repressor Rex (215 aa).

The H-T-H motif DNA-binding region spans 18–57; it reads LYYRFLKNLHASGKQRVSSAELSDAVKVDSATIRRDFSYF. 92–97 provides a ligand contact to NAD(+); the sequence is GVGNLG.

The protein belongs to the transcriptional regulatory Rex family. As to quaternary structure, homodimer.

The protein localises to the cytoplasm. Functionally, modulates transcription in response to changes in cellular NADH/NAD(+) redox state. This is Redox-sensing transcriptional repressor Rex from Bacillus velezensis (strain DSM 23117 / BGSC 10A6 / LMG 26770 / FZB42) (Bacillus amyloliquefaciens subsp. plantarum).